The primary structure comprises 716 residues: Polyribonucleotide nucleotidyltransferase (716 aa).

Residues aspartate 490 and aspartate 496 each coordinate Mg(2+). In terms of domain architecture, KH spans 556-615 (PKIETLTIPTDKIREVIGSGGKVIREIVETSGAKVDINDDGVIKIASNDQAAIKKAYDMI). One can recognise an S1 motif domain in the interval 625–693 (GQIYTGKVVK…ERGKVRLGMK (69 aa)). Residues 695-716 (VDQETGQEIQPEKKEKEEAGEA) form a disordered region. Residues 704–716 (QPEKKEKEEAGEA) are compositionally biased toward basic and acidic residues.

This sequence belongs to the polyribonucleotide nucleotidyltransferase family. It depends on Mg(2+) as a cofactor.

The protein localises to the cytoplasm. The catalysed reaction is RNA(n+1) + phosphate = RNA(n) + a ribonucleoside 5'-diphosphate. Involved in mRNA degradation. Catalyzes the phosphorolysis of single-stranded polyribonucleotides processively in the 3'- to 5'-direction. This Cereibacter sphaeroides (strain ATCC 17029 / ATH 2.4.9) (Rhodobacter sphaeroides) protein is Polyribonucleotide nucleotidyltransferase.